The sequence spans 89 residues: Cell division protein ZapA (89 aa).

Belongs to the ZapA family. Type 2 subfamily. As to quaternary structure, homodimer. Interacts with FtsZ.

The protein resides in the cytoplasm. Activator of cell division through the inhibition of FtsZ GTPase activity, therefore promoting FtsZ assembly into bundles of protofilaments necessary for the formation of the division Z ring. It is recruited early at mid-cell but it is not essential for cell division. The polypeptide is Cell division protein ZapA (Bacillus thuringiensis (strain Al Hakam)).